Here is a 433-residue protein sequence, read N- to C-terminus: 23S rRNA (uracil(1939)-C(5))-methyltransferase RlmD (433 aa).

The region spanning 10 to 68 (RTTTRQIITVSVNDLDSFGQGVARHNGKTLFIPGLLPQENAEVTVTEDKKQYARAKVVR) is the TRAM domain. The [4Fe-4S] cluster site is built by C81, C87, C90, and C162. S-adenosyl-L-methionine-binding residues include Q265, F294, N299, E315, N342, and D363. The active-site Nucleophile is C389.

It belongs to the class I-like SAM-binding methyltransferase superfamily. RNA M5U methyltransferase family. RlmD subfamily.

The enzyme catalyses uridine(1939) in 23S rRNA + S-adenosyl-L-methionine = 5-methyluridine(1939) in 23S rRNA + S-adenosyl-L-homocysteine + H(+). Catalyzes the formation of 5-methyl-uridine at position 1939 (m5U1939) in 23S rRNA. This is 23S rRNA (uracil(1939)-C(5))-methyltransferase RlmD from Escherichia coli O157:H7.